Here is a 376-residue protein sequence, read N- to C-terminus: Homeobox protein extradenticle (376 aa).

Residues 16–35 (APQGYSLSGQDDGQNTGNEN) form a disordered region. The segment covering 20 to 34 (YSLSGQDDGQNTGNE) has biased composition (polar residues). Residues 38–237 (RKQKDIGEIL…VMILRSRFLD (200 aa)) form the PBC domain. Residues 45–124 (EILQQIMSIS…EGVAGPEKGG (80 aa)) form a PBC-A region. Residues 127–237 (AAAASAAAAS…VMILRSRFLD (111 aa)) form a PBC-B region. The homeobox; TALE-type DNA-binding region spans 238 to 300 (ARRKRRNFSK…NKRIRYKKNI (63 aa)). The span at 318-335 (ASPYSMAGPPSGTTTPMM) shows a compositional bias: low complexity. The segment at 318 to 376 (ASPYSMAGPPSGTTTPMMSPAPPQDSMGYTMGSGGYDQQQPYDNSMGGYDPNLHQDLSP) is disordered.

The protein belongs to the TALE/PBX homeobox family. In terms of assembly, interacts with Ubx and hth.

It localises to the nucleus. Its function is as follows. Transcription factor which acts with the selector homeodomain proteins altering the regulation of downstream target genes such as wingless (wg), teashirt (tsh) and decapentaplegic (dpp), thus affecting segmental identity. Delimits the eye field and prevent inappropriate eye development. Required for proper localization of chordotonal organs within the peripheral nervous system. This chain is Homeobox protein extradenticle, found in Drosophila pseudoobscura pseudoobscura (Fruit fly).